The chain runs to 193 residues: D-alanyl-D-alanine dipeptidase (193 aa).

Zn(2+) is bound by residues histidine 98 and aspartate 105. Glutamate 162 acts as the Proton donor/acceptor in catalysis. Zn(2+) is bound at residue histidine 165.

The protein belongs to the peptidase M15D family. It depends on Zn(2+) as a cofactor.

It localises to the cytoplasm. It carries out the reaction D-alanyl-D-alanine + H2O = 2 D-alanine. Catalyzes hydrolysis of the D-alanyl-D-alanine dipeptide. May have a role in cell-wall turnover. The polypeptide is D-alanyl-D-alanine dipeptidase (Escherichia coli (strain K12)).